A 319-amino-acid chain; its full sequence is Acetyl-coenzyme A carboxylase carboxyl transferase subunit alpha (319 aa).

The CoA carboxyltransferase C-terminal domain maps to 35-296 (NIDEEVHRLR…KAQLLADLAD (262 aa)).

It belongs to the AccA family. In terms of assembly, acetyl-CoA carboxylase is a heterohexamer composed of biotin carboxyl carrier protein (AccB), biotin carboxylase (AccC) and two subunits each of ACCase subunit alpha (AccA) and ACCase subunit beta (AccD).

The protein resides in the cytoplasm. The enzyme catalyses N(6)-carboxybiotinyl-L-lysyl-[protein] + acetyl-CoA = N(6)-biotinyl-L-lysyl-[protein] + malonyl-CoA. The protein operates within lipid metabolism; malonyl-CoA biosynthesis; malonyl-CoA from acetyl-CoA: step 1/1. Its function is as follows. Component of the acetyl coenzyme A carboxylase (ACC) complex. First, biotin carboxylase catalyzes the carboxylation of biotin on its carrier protein (BCCP) and then the CO(2) group is transferred by the carboxyltransferase to acetyl-CoA to form malonyl-CoA. This is Acetyl-coenzyme A carboxylase carboxyl transferase subunit alpha from Klebsiella pneumoniae (strain 342).